Reading from the N-terminus, the 209-residue chain is MDWDNVAAEDVIEALREVEWSTPPRSFGEFFSRFAFPRSFSKWKSRLKCNLYYYRTNYFILVIFVLGLALVTRPLALVGAALTALSIAFLNDSFAASFNEKFIRTIRHFSPHMAAKMRPPHMPVIRGRSTARKTVYVCGKPRWVFVITFLTASLVMWFSSCGLLWVLYALLTSLAVIIVHASIRTPNLKARLNTFREEFRAVWRNYSEL.

Helical transmembrane passes span 51–72 (LYYYRTNYFILVIFVLGLALVT), 76–98 (ALVGAALTALSIAFLNDSFAASF), 142–162 (RWVFVITFLTASLVMWFSSCG), and 163–183 (LLWVLYALLTSLAVIIVHASI).

It belongs to the PRA1 family.

Its subcellular location is the endosome membrane. Its function is as follows. May be involved in both secretory and endocytic intracellular trafficking in the endosomal/prevacuolar compartments. This chain is PRA1 family protein A2 (PRA1A2), found in Arabidopsis thaliana (Mouse-ear cress).